The primary structure comprises 340 residues: UDP-3-O-acylglucosamine N-acyltransferase (340 aa).

His-238 functions as the Proton acceptor in the catalytic mechanism.

It belongs to the transferase hexapeptide repeat family. LpxD subfamily. In terms of assembly, homotrimer.

It carries out the reaction a UDP-3-O-[(3R)-3-hydroxyacyl]-alpha-D-glucosamine + a (3R)-hydroxyacyl-[ACP] = a UDP-2-N,3-O-bis[(3R)-3-hydroxyacyl]-alpha-D-glucosamine + holo-[ACP] + H(+). Its pathway is bacterial outer membrane biogenesis; LPS lipid A biosynthesis. Functionally, catalyzes the N-acylation of UDP-3-O-acylglucosamine using 3-hydroxyacyl-ACP as the acyl donor. Is involved in the biosynthesis of lipid A, a phosphorylated glycolipid that anchors the lipopolysaccharide to the outer membrane of the cell. The polypeptide is UDP-3-O-acylglucosamine N-acyltransferase (Shewanella frigidimarina (strain NCIMB 400)).